The primary structure comprises 126 residues: Glycine cleavage system H protein (126 aa).

Residues 23–104 form the Lipoyl-binding domain; it reads TLTVGITDHA…PYESWLFKIK (82 aa). Lys64 carries the post-translational modification N6-lipoyllysine.

The protein belongs to the GcvH family. As to quaternary structure, the glycine cleavage system is composed of four proteins: P, T, L and H. (R)-lipoate serves as cofactor.

The glycine cleavage system catalyzes the degradation of glycine. The H protein shuttles the methylamine group of glycine from the P protein to the T protein. The sequence is that of Glycine cleavage system H protein from Paraburkholderia phytofirmans (strain DSM 17436 / LMG 22146 / PsJN) (Burkholderia phytofirmans).